We begin with the raw amino-acid sequence, 274 residues long: ATP synthase subunit delta (274 aa).

This sequence belongs to the ATPase delta chain family. In terms of assembly, F-type ATPases have 2 components, F(1) - the catalytic core - and F(0) - the membrane proton channel. F(1) has five subunits: alpha(3), beta(3), gamma(1), delta(1), epsilon(1). F(0) has three main subunits: a(1), b(2) and c(10-14). The alpha and beta chains form an alternating ring which encloses part of the gamma chain. F(1) is attached to F(0) by a central stalk formed by the gamma and epsilon chains, while a peripheral stalk is formed by the delta and b chains.

Its subcellular location is the cell membrane. F(1)F(0) ATP synthase produces ATP from ADP in the presence of a proton or sodium gradient. F-type ATPases consist of two structural domains, F(1) containing the extramembraneous catalytic core and F(0) containing the membrane proton channel, linked together by a central stalk and a peripheral stalk. During catalysis, ATP synthesis in the catalytic domain of F(1) is coupled via a rotary mechanism of the central stalk subunits to proton translocation. In terms of biological role, this protein is part of the stalk that links CF(0) to CF(1). It either transmits conformational changes from CF(0) to CF(1) or is implicated in proton conduction. This is ATP synthase subunit delta from Streptomyces coelicolor (strain ATCC BAA-471 / A3(2) / M145).